The sequence spans 59 residues: MDHRLLEIIACPVCNGKLSYDKENFELICKLDRLAFPVRDGIPVLLEHEARELPLDEEK.

The protein belongs to the UPF0434 family.

This chain is UPF0434 protein plu1633, found in Photorhabdus laumondii subsp. laumondii (strain DSM 15139 / CIP 105565 / TT01) (Photorhabdus luminescens subsp. laumondii).